The primary structure comprises 300 residues: Acetylglutamate kinase (300 aa).

Substrate contacts are provided by residues 72 to 73, Arg94, and Asn197; that span reads GG.

It belongs to the acetylglutamate kinase family. ArgB subfamily.

The protein resides in the cytoplasm. The enzyme catalyses N-acetyl-L-glutamate + ATP = N-acetyl-L-glutamyl 5-phosphate + ADP. The protein operates within amino-acid biosynthesis; L-arginine biosynthesis; N(2)-acetyl-L-ornithine from L-glutamate: step 2/4. Its function is as follows. Catalyzes the ATP-dependent phosphorylation of N-acetyl-L-glutamate. In Azoarcus sp. (strain BH72), this protein is Acetylglutamate kinase.